The primary structure comprises 498 residues: Galactose-1-phosphate uridylyltransferase (498 aa).

Belongs to the galactose-1-phosphate uridylyltransferase type 2 family.

The protein localises to the cytoplasm. The enzyme catalyses alpha-D-galactose 1-phosphate + UDP-alpha-D-glucose = alpha-D-glucose 1-phosphate + UDP-alpha-D-galactose. It participates in carbohydrate metabolism; galactose metabolism. In Latilactobacillus sakei subsp. sakei (strain 23K) (Lactobacillus sakei subsp. sakei), this protein is Galactose-1-phosphate uridylyltransferase.